A 165-amino-acid chain; its full sequence is Large ribosomal subunit protein uL11 (165 aa).

Serine 38 bears the Phosphoserine mark. A Glycyl lysine isopeptide (Lys-Gly) (interchain with G-Cter in SUMO2) cross-link involves residue lysine 40. Residue lysine 48 forms a Glycyl lysine isopeptide (Lys-Gly) (interchain with G-Cter in ubiquitin) linkage. Lysine 54 is modified (N6-acetyllysine). Lysine 83 participates in a covalent cross-link: Glycyl lysine isopeptide (Lys-Gly) (interchain with G-Cter in ubiquitin). Serine 165 is modified (phosphoserine).

Belongs to the universal ribosomal protein uL11 family. As to quaternary structure, component of the large ribosomal subunit. Mature ribosomes consist of a small (40S) and a large (60S) subunit. The 40S subunit contains about 33 different proteins and 1 molecule of RNA (18S). The 60S subunit contains about 49 different proteins and 3 molecules of RNA (28S, 5.8S and 5S). Ubiquitinated at Lys-48 and Lys-83 by RNF14 and RNF25 in response to ribosome collisions (ribosome stalling).

It is found in the cytoplasm. Component of the large ribosomal subunit. The ribosome is a large ribonucleoprotein complex responsible for the synthesis of proteins in the cell. Binds directly to 26S ribosomal RNA. The polypeptide is Large ribosomal subunit protein uL11 (Rpl12) (Rattus norvegicus (Rat)).